The sequence spans 191 residues: Small ribosomal subunit protein bS6 (191 aa).

The segment at 168–191 is disordered; the sequence is KVNLTRKPTPNKSSENKQKVEKQA. Over residues 181-191 the composition is skewed to basic and acidic residues; sequence SENKQKVEKQA.

Belongs to the bacterial ribosomal protein bS6 family.

Its function is as follows. Binds together with bS18 to 16S ribosomal RNA. This chain is Small ribosomal subunit protein bS6, found in Mycoplasmoides gallisepticum (strain R(low / passage 15 / clone 2)) (Mycoplasma gallisepticum).